Consider the following 412-residue polypeptide: Small ribosomal subunit protein mL103 (rPPR7) (412 aa).

The transit peptide at 1-14 directs the protein to the mitochondrion; that stretch reads MASSRISLRLVRRF. Residues 21 to 37 are compositionally biased toward polar residues; sequence GTTTAPSSGKISVSKAK. Positions 21-43 are disordered; it reads GTTTAPSSGKISVSKAKSTLRKE. PPR repeat units lie at residues 101-135, 136-166, 173-207, 208-242, 243-276, 277-311, 312-346, and 347-377; these read EEPF…GTPR, SAVS…IPQR, DKIS…GMEV, TTIA…GCEL, DNAA…GLKP, DTIS…NCAP, NAAT…HKIP, and DFNT…VKKK.

The protein belongs to the PPR family. P subfamily. As to quaternary structure, component of the mitochondrial ribosome small subunit.

The protein localises to the mitochondrion. The polypeptide is Small ribosomal subunit protein mL103 (rPPR7) (Arabidopsis thaliana (Mouse-ear cress)).